Reading from the N-terminus, the 233-residue chain is Serine-rich 25 kDa antigen protein (233 aa).

Positions 35 to 219 (KNEASPEKLE…DNNNLDAASS (185 aa)) are disordered. The span at 38 to 53 (ASPEKLEEAEEKEKSS) shows a compositional bias: basic and acidic residues. The span at 61 to 71 (SNEDNEDDEDE) shows a compositional bias: acidic residues. A run of 10 repeats spans residues 82-93 (SSSDKPDNKPEA), 102-113 (SSSDKPDNKPEA), 114-125 (SSSDKPDNKPEA), 126-137 (SSSDKPDNKPEA), 138-149 (SSSDKPDNKPEA), 150-161 (SSSDKPDNKPEA), 162-169 (SSTNKPEA), 170-177 (SSTNKPEA), 178-185 (SSTNKPEA), and 186-193 (SSTNKPEA). The segment at 82-161 (SSSDKPDNKP…SDKPDNKPEA (80 aa)) is 6 X 12 AA tandem repeats of S-S-S-D-K-P-D-N-K-P-E-A. Residues 83-159 (SSDKPDNKPE…SSSDKPDNKP (77 aa)) show a composition bias toward basic and acidic residues. Residues 160–192 (EASSTNKPEASSTNKPEASSTNKPEASSTNKPE) show a composition bias toward polar residues. Positions 162-193 (SSTNKPEASSTNKPEASSTNKPEASSTNKPEA) are 4 X 8 AA tandem repeats of S-S-T-N-K-P-E-A. A compositionally biased stretch (low complexity) spans 193 to 219 (ASSTSNSNDKSGSSSDNDNNNLDAASS).

Post-translationally, phosphorylated on serine residue(s). O-glycosylated; glycans consist of single N-acetylglucosamine residues. In terms of processing, O-acylated; acyl group is probably palmitate, not myristate.

Its subcellular location is the cell membrane. Its function is as follows. Plays a role in the adhesion to host cells. Involved in the adhesion to host apoptotic cells thereby facilitating their phagocytosis. The sequence is that of Serine-rich 25 kDa antigen protein from Entamoeba histolytica (strain ATCC 30459 / HM-1:IMSS / ABRM).